Reading from the N-terminus, the 144-residue chain is Neuritin-A (144 aa).

An N-terminal signal peptide occupies residues 1–27 (MGLKLSGRYIFLVLAVHLAYLLQAVKA). Ser114 is lipidated: GPI-anchor amidated serine. Residues 115-144 (AGAPGQRLLFPAFLPLLMVFLSTLFILVLQ) constitute a propeptide, removed in mature form.

It belongs to the neuritin family. In terms of tissue distribution, expressed in sensory regions of the brain including the visual, auditory and olfactory systems. Within the retina, only expressed in the retinal ganglion cells. Concentrated in axon tracts including retinal axons.

The protein resides in the cell membrane. Its function is as follows. Modulates postsynaptic dendritic arbor elaboration and synaptic maturation. This Xenopus laevis (African clawed frog) protein is Neuritin-A (nrn1-a).